The primary structure comprises 442 residues: Dol-P-Man:Man(5)GlcNAc(2)-PP-Dol alpha-1,3-mannosyltransferase (442 aa).

At 1–34 (MAAPSSRPESNPPLYKQALDFALDVANGRHALSK) the chain is on the lumenal side. A helical transmembrane segment spans residues 35 to 55 (LIPPALFLVDALLCGLIIWKV). Residues 56–84 (PYTEIDWAAYMEQVSQILSGERDYTKVRG) are Cytoplasmic-facing. Residues 85 to 105 (GTGPLVYPAAHVYIYTGLYHL) traverse the membrane as a helical segment. Topologically, residues 106 to 111 (TDEGRN) are lumenal. A helical membrane pass occupies residues 112 to 132 (ILLAQQLFAGLYMVTLAVVMG). The Cytoplasmic segment spans residues 133–155 (CYWQAKAPPYLFPLLTLSKRLHS). A helical membrane pass occupies residues 156–176 (IFVLRCFNDCFAVLFLWLAIF). Topologically, residues 177-198 (FFQRRNWQAGALLYTLGLGVKM) are lumenal. The chain crosses the membrane as a helical span at residues 199–219 (TLLLSLPAVGIVLFLGSGSFV). Thr220 is a topological domain (cytoplasmic). Residues 221-241 (TLQLVATMGLVQILIGVPFLA) form a helical membrane-spanning segment. Residues 242–272 (HYPTEYLSRAFELSRQFFFKWTVNWRFVGEE) are Lumenal-facing. The chain crosses the membrane as a helical span at residues 273 to 293 (IFLSKGFALTLLALHVLVLGI). Residues 294–333 (FITTRWIKPARKSLVQLISPVLLAGKPPLTVPEHRAAARD) are Cytoplasmic-facing. The chain crosses the membrane as a helical span at residues 334–354 (VTPRYIMTTILSANAVGLLFA). The Lumenal segment spans residues 355–376 (RSLHYQFYAYVAWSTPFLLWRA). Residues 377–397 (GLHPVLVYLLWAVHEWAWNVF) traverse the membrane as a helical segment. Residues 398-401 (PSTP) lie on the Cytoplasmic side of the membrane. The helical transmembrane segment at 402–422 (ASSAVVVGVLGVTVAGVWFGA) threads the bilayer. The Lumenal portion of the chain corresponds to 423-442 (REEWEPGMKSSSKKEEAAMR).

Belongs to the glycosyltransferase ALG3 family.

The protein resides in the endoplasmic reticulum membrane. It catalyses the reaction an alpha-D-Man-(1-&gt;2)-alpha-D-Man-(1-&gt;2)-alpha-D-Man-(1-&gt;3)-[alpha-D-Man-(1-&gt;6)]-beta-D-Man-(1-&gt;4)-beta-D-GlcNAc-(1-&gt;4)-alpha-D-GlcNAc-diphospho-di-trans,poly-cis-dolichol + a di-trans,poly-cis-dolichyl beta-D-mannosyl phosphate = an alpha-D-Man-(1-&gt;2)-alpha-D-Man-(1-&gt;2)-alpha-D-Man-(1-&gt;3)-[alpha-D-Man-(1-&gt;3)-alpha-D-Man-(1-&gt;6)]-beta-D-Man-(1-&gt;4)-beta-D-GlcNAc-(1-&gt;4)-alpha-D-GlcNAc-diphospho-di-trans,poly-cis-dolichol + a di-trans,poly-cis-dolichyl phosphate + H(+). Its pathway is protein modification; protein glycosylation. In terms of biological role, dol-P-Man:Man(5)GlcNAc(2)-PP-Dol alpha-1,3-mannosyltransferase that operates in the biosynthetic pathway of dolichol-linked oligosaccharides, the glycan precursors employed in protein asparagine (N)-glycosylation. The assembly of dolichol-linked oligosaccharides begins on the cytosolic side of the endoplasmic reticulum membrane and finishes in its lumen. The sequential addition of sugars to dolichol pyrophosphate produces dolichol-linked oligosaccharides containing fourteen sugars, including two GlcNAcs, nine mannoses and three glucoses. Once assembled, the oligosaccharide is transferred from the lipid to nascent proteins by oligosaccharyltransferases. In the lumen of the endoplasmic reticulum, adds the first dolichyl beta-D-mannosyl phosphate derived mannose in an alpha-1,3 linkage to Man(5)GlcNAc(2)-PP-dolichol to produce Man(6)GlcNAc(2)-PP-dolichol. The protein is Dol-P-Man:Man(5)GlcNAc(2)-PP-Dol alpha-1,3-mannosyltransferase (alg-3) of Neurospora crassa (strain ATCC 24698 / 74-OR23-1A / CBS 708.71 / DSM 1257 / FGSC 987).